Reading from the N-terminus, the 127-residue chain is Small ribosomal subunit protein eS8 (127 aa).

The protein belongs to the eukaryotic ribosomal protein eS8 family. As to quaternary structure, part of the 30S ribosomal subunit.

The chain is Small ribosomal subunit protein eS8 (rps8e) from Pyrococcus horikoshii (strain ATCC 700860 / DSM 12428 / JCM 9974 / NBRC 100139 / OT-3).